Reading from the N-terminus, the 296-residue chain is Acetyl-coenzyme A carboxylase carboxyl transferase subunit beta (296 aa).

One can recognise a CoA carboxyltransferase N-terminal domain in the interval 25-294 (VWTKCTSCEQ…PFVEPELISE (270 aa)). Cys29, Cys32, Cys48, and Cys51 together coordinate Zn(2+). A C4-type zinc finger spans residues 29-51 (CTSCEQVLYSEELKRNLYVCPKC).

The protein belongs to the AccD/PCCB family. As to quaternary structure, acetyl-CoA carboxylase is a heterohexamer composed of biotin carboxyl carrier protein (AccB), biotin carboxylase (AccC) and two subunits each of ACCase subunit alpha (AccA) and ACCase subunit beta (AccD). The cofactor is Zn(2+).

The protein localises to the cytoplasm. The catalysed reaction is N(6)-carboxybiotinyl-L-lysyl-[protein] + acetyl-CoA = N(6)-biotinyl-L-lysyl-[protein] + malonyl-CoA. It functions in the pathway lipid metabolism; malonyl-CoA biosynthesis; malonyl-CoA from acetyl-CoA: step 1/1. Functionally, component of the acetyl coenzyme A carboxylase (ACC) complex. Biotin carboxylase (BC) catalyzes the carboxylation of biotin on its carrier protein (BCCP) and then the CO(2) group is transferred by the transcarboxylase to acetyl-CoA to form malonyl-CoA. The polypeptide is Acetyl-coenzyme A carboxylase carboxyl transferase subunit beta (Haemophilus influenzae (strain PittEE)).